Consider the following 158-residue polypeptide: Ribosome maturation factor RimP (158 aa).

This sequence belongs to the RimP family.

It localises to the cytoplasm. Functionally, required for maturation of 30S ribosomal subunits. This chain is Ribosome maturation factor RimP, found in Streptococcus uberis (strain ATCC BAA-854 / 0140J).